The following is a 173-amino-acid chain: ATP-dependent protease subunit HslV (173 aa).

Residue Thr-2 is part of the active site. Na(+)-binding residues include Gly-158, Asp-161, and Ser-164.

This sequence belongs to the peptidase T1B family. HslV subfamily. A double ring-shaped homohexamer of HslV is capped on each side by a ring-shaped HslU homohexamer. The assembly of the HslU/HslV complex is dependent on binding of ATP.

The protein localises to the cytoplasm. The enzyme catalyses ATP-dependent cleavage of peptide bonds with broad specificity.. Allosterically activated by HslU binding. In terms of biological role, protease subunit of a proteasome-like degradation complex believed to be a general protein degrading machinery. The chain is ATP-dependent protease subunit HslV from Actinobacillus pleuropneumoniae serotype 5b (strain L20).